A 197-amino-acid chain; its full sequence is MAPVPGSGLAKGLAVTLRTMTRKTVTEQYPDAQPELPPRTRGVIGLFEENCTVCMLCARECPDWCIYIDSHKETVPAATPGGRDRSRNVLDRFAIDFALCMYCGICIEVCPFDALFWSPEFEYAETDIRDLTHERDKLREWMWTVPAPPALDPGAEEPKELAAARKAADKLAAQQQPDQPGPDHPGQPDESGQEGRT.

4Fe-4S ferredoxin-type domains are found at residues 42 to 71 and 91 to 120; these read GVIG…IDSH and DRFA…WSPE. Residues Cys-51, Cys-54, Cys-57, Cys-61, Cys-100, Cys-103, Cys-106, and Cys-110 each coordinate [4Fe-4S] cluster. The interval 147 to 197 is disordered; it reads APPALDPGAEEPKELAAARKAADKLAAQQQPDQPGPDHPGQPDESGQEGRT. Residues 156-169 are compositionally biased toward basic and acidic residues; that stretch reads EEPKELAAARKAAD.

This sequence belongs to the complex I 23 kDa subunit family. In terms of assembly, NDH-1 is composed of 14 different subunits. Subunits NuoA, H, J, K, L, M, N constitute the membrane sector of the complex. [4Fe-4S] cluster is required as a cofactor.

Its subcellular location is the cell membrane. The enzyme catalyses a quinone + NADH + 5 H(+)(in) = a quinol + NAD(+) + 4 H(+)(out). In terms of biological role, NDH-1 shuttles electrons from NADH, via FMN and iron-sulfur (Fe-S) centers, to quinones in the respiratory chain. The immediate electron acceptor for the enzyme in this species is believed to be ubiquinone. Couples the redox reaction to proton translocation (for every two electrons transferred, four hydrogen ions are translocated across the cytoplasmic membrane), and thus conserves the redox energy in a proton gradient. The polypeptide is NADH-quinone oxidoreductase subunit I 2 (Streptomyces coelicolor (strain ATCC BAA-471 / A3(2) / M145)).